Consider the following 239-residue polypeptide: Ubiquinone biosynthesis O-methyltransferase (239 aa).

The S-adenosyl-L-methionine site is built by arginine 44, glycine 63, aspartate 84, and methionine 128.

Belongs to the methyltransferase superfamily. UbiG/COQ3 family.

The catalysed reaction is a 3-demethylubiquinol + S-adenosyl-L-methionine = a ubiquinol + S-adenosyl-L-homocysteine + H(+). It catalyses the reaction a 3-(all-trans-polyprenyl)benzene-1,2-diol + S-adenosyl-L-methionine = a 2-methoxy-6-(all-trans-polyprenyl)phenol + S-adenosyl-L-homocysteine + H(+). The protein operates within cofactor biosynthesis; ubiquinone biosynthesis. In terms of biological role, O-methyltransferase that catalyzes the 2 O-methylation steps in the ubiquinone biosynthetic pathway. This is Ubiquinone biosynthesis O-methyltransferase from Xanthomonas campestris pv. campestris (strain 8004).